We begin with the raw amino-acid sequence, 171 residues long: S-ribosylhomocysteine lyase (171 aa).

Fe cation is bound by residues histidine 54, histidine 58, and cysteine 128.

The protein belongs to the LuxS family. As to quaternary structure, homodimer. Fe cation serves as cofactor.

It catalyses the reaction S-(5-deoxy-D-ribos-5-yl)-L-homocysteine = (S)-4,5-dihydroxypentane-2,3-dione + L-homocysteine. Functionally, involved in the synthesis of autoinducer 2 (AI-2) which is secreted by bacteria and is used to communicate both the cell density and the metabolic potential of the environment. The regulation of gene expression in response to changes in cell density is called quorum sensing. Catalyzes the transformation of S-ribosylhomocysteine (RHC) to homocysteine (HC) and 4,5-dihydroxy-2,3-pentadione (DPD). The protein is S-ribosylhomocysteine lyase of Photorhabdus laumondii subsp. laumondii (strain DSM 15139 / CIP 105565 / TT01) (Photorhabdus luminescens subsp. laumondii).